Consider the following 91-residue polypeptide: Large ribosomal subunit protein bL27 (91 aa).

The segment at 1–22 is disordered; that stretch reads MAHKKAGGSSRNGRDSDGRRLG.

The protein belongs to the bacterial ribosomal protein bL27 family.

This Beijerinckia indica subsp. indica (strain ATCC 9039 / DSM 1715 / NCIMB 8712) protein is Large ribosomal subunit protein bL27.